Reading from the N-terminus, the 131-residue chain is D-ribose pyranase (131 aa).

The active-site Proton donor is the His20. Substrate is bound by residues Asp28, His98, and 120-122 (YAN).

It belongs to the RbsD / FucU family. RbsD subfamily. Homodecamer.

The protein localises to the cytoplasm. The catalysed reaction is beta-D-ribopyranose = beta-D-ribofuranose. It participates in carbohydrate metabolism; D-ribose degradation; D-ribose 5-phosphate from beta-D-ribopyranose: step 1/2. Catalyzes the interconversion of beta-pyran and beta-furan forms of D-ribose. The chain is D-ribose pyranase from Bacillus velezensis (strain DSM 23117 / BGSC 10A6 / LMG 26770 / FZB42) (Bacillus amyloliquefaciens subsp. plantarum).